Here is a 549-residue protein sequence, read N- to C-terminus: Glucose-6-phosphate isomerase (549 aa).

Glu355 acts as the Proton donor in catalysis. Catalysis depends on residues His386 and Lys514.

Belongs to the GPI family.

The protein localises to the cytoplasm. It carries out the reaction alpha-D-glucose 6-phosphate = beta-D-fructose 6-phosphate. Its pathway is carbohydrate biosynthesis; gluconeogenesis. It functions in the pathway carbohydrate degradation; glycolysis; D-glyceraldehyde 3-phosphate and glycerone phosphate from D-glucose: step 2/4. Functionally, catalyzes the reversible isomerization of glucose-6-phosphate to fructose-6-phosphate. The sequence is that of Glucose-6-phosphate isomerase from Salmonella schwarzengrund (strain CVM19633).